Reading from the N-terminus, the 367-residue chain is UDP-N-acetylglucosamine--N-acetylmuramyl-(pentapeptide) pyrophosphoryl-undecaprenol N-acetylglucosamine transferase (367 aa).

UDP-N-acetyl-alpha-D-glucosamine is bound by residues 18-20, Asn130, Arg170, Ser196, Ile252, 271-276, and Gln297; these read TGG and ALTVSE.

This sequence belongs to the glycosyltransferase 28 family. MurG subfamily.

It localises to the cell inner membrane. It catalyses the reaction di-trans,octa-cis-undecaprenyl diphospho-N-acetyl-alpha-D-muramoyl-L-alanyl-D-glutamyl-meso-2,6-diaminopimeloyl-D-alanyl-D-alanine + UDP-N-acetyl-alpha-D-glucosamine = di-trans,octa-cis-undecaprenyl diphospho-[N-acetyl-alpha-D-glucosaminyl-(1-&gt;4)]-N-acetyl-alpha-D-muramoyl-L-alanyl-D-glutamyl-meso-2,6-diaminopimeloyl-D-alanyl-D-alanine + UDP + H(+). It participates in cell wall biogenesis; peptidoglycan biosynthesis. Cell wall formation. Catalyzes the transfer of a GlcNAc subunit on undecaprenyl-pyrophosphoryl-MurNAc-pentapeptide (lipid intermediate I) to form undecaprenyl-pyrophosphoryl-MurNAc-(pentapeptide)GlcNAc (lipid intermediate II). This Shewanella frigidimarina (strain NCIMB 400) protein is UDP-N-acetylglucosamine--N-acetylmuramyl-(pentapeptide) pyrophosphoryl-undecaprenol N-acetylglucosamine transferase.